The primary structure comprises 316 residues: Beta-ketoacyl-[acyl-carrier-protein] synthase III (316 aa).

Residues cysteine 112 and histidine 243 contribute to the active site. The ACP-binding stretch occupies residues 244–248 (QANLR). Residue asparagine 273 is part of the active site.

It belongs to the thiolase-like superfamily. FabH family. As to quaternary structure, homodimer.

Its subcellular location is the cytoplasm. It catalyses the reaction malonyl-[ACP] + acetyl-CoA + H(+) = 3-oxobutanoyl-[ACP] + CO2 + CoA. Its pathway is lipid metabolism; fatty acid biosynthesis. Catalyzes the condensation reaction of fatty acid synthesis by the addition to an acyl acceptor of two carbons from malonyl-ACP. Catalyzes the first condensation reaction which initiates fatty acid synthesis and may therefore play a role in governing the total rate of fatty acid production. Possesses both acetoacetyl-ACP synthase and acetyl transacylase activities. Its substrate specificity determines the biosynthesis of branched-chain and/or straight-chain of fatty acids. The sequence is that of Beta-ketoacyl-[acyl-carrier-protein] synthase III from Actinobacillus succinogenes (strain ATCC 55618 / DSM 22257 / CCUG 43843 / 130Z).